Reading from the N-terminus, the 717-residue chain is Ubiquitin carboxyl-terminal hydrolase 11 (717 aa).

Residues 231–268 form a disordered region; the sequence is ATAPPVHSLEVSSQIRDSSQDSSSSLSKVEKPKEEEGK. The span at 242 to 257 shows a compositional bias: low complexity; that stretch reads SSQIRDSSQDSSSSLS. The segment covering 258 to 268 has biased composition (basic and acidic residues); it reads KVEKPKEEEGK. The 410-residue stretch at 298–707 folds into the USP domain; that stretch reads TGLQNPCNTC…EVYVLFYERM (410 aa). Cys-307 (nucleophile) is an active-site residue. The interval 531 to 577 is disordered; that stretch reads KKEEITSQKKKSTIFGFHSRSRSKSPHHHHHHHHSSDDSTKNAKKRN. Residues 549–564 show a composition bias toward basic residues; it reads SRSRSKSPHHHHHHHH. His-649 (proton acceptor) is an active-site residue.

It belongs to the peptidase C19 family.

The catalysed reaction is Thiol-dependent hydrolysis of ester, thioester, amide, peptide and isopeptide bonds formed by the C-terminal Gly of ubiquitin (a 76-residue protein attached to proteins as an intracellular targeting signal).. The chain is Ubiquitin carboxyl-terminal hydrolase 11 (UBP11) from Saccharomyces cerevisiae (strain ATCC 204508 / S288c) (Baker's yeast).